We begin with the raw amino-acid sequence, 180 residues long: Segregation and condensation protein B (180 aa).

This sequence belongs to the ScpB family. Homodimer. Homodimerization may be required to stabilize the binding of ScpA to the Smc head domains. Component of a cohesin-like complex composed of ScpA, ScpB and the Smc homodimer, in which ScpA and ScpB bind to the head domain of Smc. The presence of the three proteins is required for the association of the complex with DNA.

It is found in the cytoplasm. In terms of biological role, participates in chromosomal partition during cell division. May act via the formation of a condensin-like complex containing Smc and ScpA that pull DNA away from mid-cell into both cell halves. The protein is Segregation and condensation protein B of Staphylococcus aureus (strain USA300).